Here is a 683-residue protein sequence, read N- to C-terminus: DNA-directed RNA polymerase subunit beta' (683 aa).

Cys69, Cys71, Cys87, and Cys90 together coordinate Zn(2+). Mg(2+) contacts are provided by Asp489, Asp491, and Asp493.

It belongs to the RNA polymerase beta' chain family. RpoC1 subfamily. In plastids the minimal PEP RNA polymerase catalytic core is composed of four subunits: alpha, beta, beta', and beta''. When a (nuclear-encoded) sigma factor is associated with the core the holoenzyme is formed, which can initiate transcription. Requires Mg(2+) as cofactor. It depends on Zn(2+) as a cofactor.

Its subcellular location is the plastid. It localises to the chloroplast. It carries out the reaction RNA(n) + a ribonucleoside 5'-triphosphate = RNA(n+1) + diphosphate. Its function is as follows. DNA-dependent RNA polymerase catalyzes the transcription of DNA into RNA using the four ribonucleoside triphosphates as substrates. The chain is DNA-directed RNA polymerase subunit beta' from Sorghum bicolor (Sorghum).